A 357-amino-acid chain; its full sequence is UDP-N-acetylglucosamine--N-acetylmuramyl-(pentapeptide) pyrophosphoryl-undecaprenol N-acetylglucosamine transferase (357 aa).

Residues 12 to 14, Asn-124, Arg-162, Ser-190, Ile-243, 262 to 267, and Gln-288 each bind UDP-N-acetyl-alpha-D-glucosamine; these read TGG and ALTVAE.

The protein belongs to the glycosyltransferase 28 family. MurG subfamily.

The protein resides in the cell inner membrane. It catalyses the reaction di-trans,octa-cis-undecaprenyl diphospho-N-acetyl-alpha-D-muramoyl-L-alanyl-D-glutamyl-meso-2,6-diaminopimeloyl-D-alanyl-D-alanine + UDP-N-acetyl-alpha-D-glucosamine = di-trans,octa-cis-undecaprenyl diphospho-[N-acetyl-alpha-D-glucosaminyl-(1-&gt;4)]-N-acetyl-alpha-D-muramoyl-L-alanyl-D-glutamyl-meso-2,6-diaminopimeloyl-D-alanyl-D-alanine + UDP + H(+). It participates in cell wall biogenesis; peptidoglycan biosynthesis. Its function is as follows. Cell wall formation. Catalyzes the transfer of a GlcNAc subunit on undecaprenyl-pyrophosphoryl-MurNAc-pentapeptide (lipid intermediate I) to form undecaprenyl-pyrophosphoryl-MurNAc-(pentapeptide)GlcNAc (lipid intermediate II). This is UDP-N-acetylglucosamine--N-acetylmuramyl-(pentapeptide) pyrophosphoryl-undecaprenol N-acetylglucosamine transferase from Alcanivorax borkumensis (strain ATCC 700651 / DSM 11573 / NCIMB 13689 / SK2).